A 152-amino-acid polypeptide reads, in one-letter code: Xanthine-guanine phosphoribosyltransferase (152 aa).

5-phospho-alpha-D-ribose 1-diphosphate-binding positions include Arg-37–Gly-38, Arg-69, and Asp-88–Thr-96. A GMP-binding site is contributed by Arg-69. Asp-89 is a Mg(2+) binding site. Positions 92 and 135 each coordinate guanine. Xanthine-binding residues include Asp-92 and Ile-135. GMP-binding positions include Asp-92–Thr-96 and Trp-134–Ile-135.

This sequence belongs to the purine/pyrimidine phosphoribosyltransferase family. XGPT subfamily. As to quaternary structure, homotetramer. Mg(2+) is required as a cofactor.

It is found in the cell inner membrane. The catalysed reaction is GMP + diphosphate = guanine + 5-phospho-alpha-D-ribose 1-diphosphate. It carries out the reaction XMP + diphosphate = xanthine + 5-phospho-alpha-D-ribose 1-diphosphate. The enzyme catalyses IMP + diphosphate = hypoxanthine + 5-phospho-alpha-D-ribose 1-diphosphate. Its pathway is purine metabolism; GMP biosynthesis via salvage pathway; GMP from guanine: step 1/1. It functions in the pathway purine metabolism; XMP biosynthesis via salvage pathway; XMP from xanthine: step 1/1. Purine salvage pathway enzyme that catalyzes the transfer of the ribosyl-5-phosphate group from 5-phospho-alpha-D-ribose 1-diphosphate (PRPP) to the N9 position of the 6-oxopurines guanine and xanthine to form the corresponding ribonucleotides GMP (guanosine 5'-monophosphate) and XMP (xanthosine 5'-monophosphate), with the release of PPi. To a lesser extent, also acts on hypoxanthine. The chain is Xanthine-guanine phosphoribosyltransferase from Aliivibrio fischeri (strain ATCC 700601 / ES114) (Vibrio fischeri).